A 74-amino-acid polypeptide reads, in one-letter code: Homeobox protein H40 (74 aa).

A DNA-binding region (homeobox) is located at residues 8–67; the sequence is ARRARTAFTYEQLVALENKFKTTRYLSVCERLNLALSLSLTETQVKIWFQNRRTKWKKQN.

It is found in the nucleus. The polypeptide is Homeobox protein H40 (Apis mellifera (Honeybee)).